The sequence spans 283 residues: Shikimate dehydrogenase (NADP(+)) (283 aa).

Residues S16–S18 and T63 each bind shikimate. Residue K67 is the Proton acceptor of the active site. NADP(+) is bound at residue D79. 2 residues coordinate shikimate: N88 and D103. Residues G128–A132, A223, and G243 each bind NADP(+).

This sequence belongs to the shikimate dehydrogenase family. As to quaternary structure, homodimer.

It catalyses the reaction shikimate + NADP(+) = 3-dehydroshikimate + NADPH + H(+). Its pathway is metabolic intermediate biosynthesis; chorismate biosynthesis; chorismate from D-erythrose 4-phosphate and phosphoenolpyruvate: step 4/7. Its function is as follows. Involved in the biosynthesis of the chorismate, which leads to the biosynthesis of aromatic amino acids. Catalyzes the reversible NADPH linked reduction of 3-dehydroshikimate (DHSA) to yield shikimate (SA). This Xanthomonas campestris pv. campestris (strain 8004) protein is Shikimate dehydrogenase (NADP(+)).